We begin with the raw amino-acid sequence, 335 residues long: Histidinol-phosphate aminotransferase (335 aa).

Position 202 is an N6-(pyridoxal phosphate)lysine (lysine 202).

This sequence belongs to the class-II pyridoxal-phosphate-dependent aminotransferase family. Histidinol-phosphate aminotransferase subfamily. As to quaternary structure, homodimer. The cofactor is pyridoxal 5'-phosphate.

The catalysed reaction is L-histidinol phosphate + 2-oxoglutarate = 3-(imidazol-4-yl)-2-oxopropyl phosphate + L-glutamate. The protein operates within amino-acid biosynthesis; L-histidine biosynthesis; L-histidine from 5-phospho-alpha-D-ribose 1-diphosphate: step 7/9. The chain is Histidinol-phosphate aminotransferase from Thermotoga neapolitana (strain ATCC 49049 / DSM 4359 / NBRC 107923 / NS-E).